The following is a 138-amino-acid chain: rRNA methyltransferase 1, mitochondrial (138 aa).

Residues 1-21 (MNNQPCSIVWRRFLTSKVKPA) constitute a mitochondrion transit peptide. The disordered stretch occupies residues 92–113 (KQDILSSKRQQEEHKSKYSRKS).

The protein belongs to the class IV-like SAM-binding methyltransferase superfamily. RNA methyltransferase TrmH family.

Its subcellular location is the mitochondrion. It catalyses the reaction a guanosine in 21S rRNA + S-adenosyl-L-methionine = a 2'-O-methylguanosine in 21S rRNA + S-adenosyl-L-homocysteine + H(+). S-adenosyl-L-methionine-dependent 2'-O-ribose methyltransferase that catalyzes the formation of the 2'-O-methylguanosine corresponding to position 2270 in S.cerevisiae 21S mitochondrial large ribosomal RNA, a universally conserved modification in the peptidyl transferase domain of the 21S rRNA. This Lachancea kluyveri (strain ATCC 58438 / CBS 3082 / BCRC 21498 / NBRC 1685 / JCM 7257 / NCYC 543 / NRRL Y-12651) (Yeast) protein is rRNA methyltransferase 1, mitochondrial.